The chain runs to 426 residues: Elongation factor 1-alpha (426 aa).

Residues 5-221 (KPHINLAVIG…NALKEPEKPT (217 aa)) form the tr-type G domain. The segment at 14 to 21 (GHIDHGKS) is G1. 14–21 (GHIDHGKS) is a GTP binding site. Ser21 serves as a coordination point for Mg(2+). Positions 70-74 (GITID) are G2. A G3 region spans residues 91–94 (DCPG). Residues 91–95 (DCPGH) and 146–149 (NKMD) each bind GTP. The segment at 146–149 (NKMD) is G4. The interval 185–187 (SAF) is G5.

This sequence belongs to the TRAFAC class translation factor GTPase superfamily. Classic translation factor GTPase family. EF-Tu/EF-1A subfamily.

The protein resides in the cytoplasm. The enzyme catalyses GTP + H2O = GDP + phosphate + H(+). GTP hydrolase that promotes the GTP-dependent binding of aminoacyl-tRNA to the A-site of ribosomes during protein biosynthesis. The sequence is that of Elongation factor 1-alpha from Methanocella arvoryzae (strain DSM 22066 / NBRC 105507 / MRE50).